The following is a 546-amino-acid chain: Chaperonin GroEL (546 aa).

ATP is bound by residues 29 to 32 (TLGP), Lys-50, 86 to 90 (DGTTT), Gly-414, 478 to 480 (NAA), and Asp-494.

It belongs to the chaperonin (HSP60) family. In terms of assembly, forms a cylinder of 14 subunits composed of two heptameric rings stacked back-to-back. Interacts with the co-chaperonin GroES.

It is found in the cytoplasm. The enzyme catalyses ATP + H2O + a folded polypeptide = ADP + phosphate + an unfolded polypeptide.. In terms of biological role, together with its co-chaperonin GroES, plays an essential role in assisting protein folding. The GroEL-GroES system forms a nano-cage that allows encapsulation of the non-native substrate proteins and provides a physical environment optimized to promote and accelerate protein folding. The protein is Chaperonin GroEL of Psychrobacter arcticus (strain DSM 17307 / VKM B-2377 / 273-4).